A 316-amino-acid chain; its full sequence is tRNA dimethylallyltransferase (316 aa).

17–24 (GPTASGKT) contacts ATP. 19–24 (TASGKT) lines the substrate pocket. Interaction with substrate tRNA regions lie at residues 42–45 (DSAL), 166–170 (QRLSR), 247–252 (RCVGYR), and 280–287 (KRQITWLR).

This sequence belongs to the IPP transferase family. As to quaternary structure, monomer. Requires Mg(2+) as cofactor.

It carries out the reaction adenosine(37) in tRNA + dimethylallyl diphosphate = N(6)-dimethylallyladenosine(37) in tRNA + diphosphate. Functionally, catalyzes the transfer of a dimethylallyl group onto the adenine at position 37 in tRNAs that read codons beginning with uridine, leading to the formation of N6-(dimethylallyl)adenosine (i(6)A). The polypeptide is tRNA dimethylallyltransferase (Shigella flexneri serotype 5b (strain 8401)).